Consider the following 140-residue polypeptide: Holo-[acyl-carrier-protein] synthase (140 aa).

Mg(2+)-binding residues include Asp9 and Glu63.

This sequence belongs to the P-Pant transferase superfamily. AcpS family. It depends on Mg(2+) as a cofactor.

It is found in the cytoplasm. The enzyme catalyses apo-[ACP] + CoA = holo-[ACP] + adenosine 3',5'-bisphosphate + H(+). In terms of biological role, transfers the 4'-phosphopantetheine moiety from coenzyme A to a Ser of acyl-carrier-protein. In Paraburkholderia phytofirmans (strain DSM 17436 / LMG 22146 / PsJN) (Burkholderia phytofirmans), this protein is Holo-[acyl-carrier-protein] synthase.